We begin with the raw amino-acid sequence, 472 residues long: 6-phosphogluconate dehydrogenase, decarboxylating (472 aa).

NADP(+) contacts are provided by residues 10 to 15, 33 to 35, 74 to 76, and Asn102; these read GMAVMG, NRT, and VQA. Substrate is bound by residues Asn102 and 128–130; that span reads SGG. The active-site Proton acceptor is Lys184. Position 187–188 (187–188) interacts with substrate; the sequence is HN. Glu191 functions as the Proton donor in the catalytic mechanism. Residues Tyr192, Lys262, Arg289, Arg447, and His453 each contribute to the substrate site.

This sequence belongs to the 6-phosphogluconate dehydrogenase family. As to quaternary structure, homodimer.

It carries out the reaction 6-phospho-D-gluconate + NADP(+) = D-ribulose 5-phosphate + CO2 + NADPH. It functions in the pathway carbohydrate degradation; pentose phosphate pathway; D-ribulose 5-phosphate from D-glucose 6-phosphate (oxidative stage): step 3/3. Functionally, catalyzes the oxidative decarboxylation of 6-phosphogluconate to ribulose 5-phosphate and CO(2), with concomitant reduction of NADP to NADPH. In Lactococcus lactis subsp. lactis (strain IL1403) (Streptococcus lactis), this protein is 6-phosphogluconate dehydrogenase, decarboxylating (gnd).